A 30-amino-acid polypeptide reads, in one-letter code: Circulin A (30 aa).

A cross-link (cyclopeptide (Gly-Asn)) is located at residues 1-30; it reads GIPCGESCVWIPCISAALGCSCKNKVCYRN. 3 disulfides stabilise this stretch: C4/C20, C8/C22, and C13/C27.

Post-translationally, this is a cyclic peptide. As to expression, expressed in fruit, pedicel, root and stem but not in leaf (at protein level).

Functionally, probably participates in a plant defense mechanism. This is Circulin A from Chassalia chartacea (Chassalia curviflora).